Reading from the N-terminus, the 359-residue chain is Peptide chain release factor 1 (359 aa).

The residue at position 236 (Gln236) is an N5-methylglutamine.

Belongs to the prokaryotic/mitochondrial release factor family. In terms of processing, methylated by PrmC. Methylation increases the termination efficiency of RF1.

Its subcellular location is the cytoplasm. In terms of biological role, peptide chain release factor 1 directs the termination of translation in response to the peptide chain termination codons UAG and UAA. The sequence is that of Peptide chain release factor 1 from Streptococcus pyogenes serotype M6 (strain ATCC BAA-946 / MGAS10394).